A 260-amino-acid polypeptide reads, in one-letter code: Imidazole glycerol phosphate synthase subunit HisF (260 aa).

Active-site residues include D11 and D130.

It belongs to the HisA/HisF family. Heterodimer of HisH and HisF.

It is found in the cytoplasm. It catalyses the reaction 5-[(5-phospho-1-deoxy-D-ribulos-1-ylimino)methylamino]-1-(5-phospho-beta-D-ribosyl)imidazole-4-carboxamide + L-glutamine = D-erythro-1-(imidazol-4-yl)glycerol 3-phosphate + 5-amino-1-(5-phospho-beta-D-ribosyl)imidazole-4-carboxamide + L-glutamate + H(+). It participates in amino-acid biosynthesis; L-histidine biosynthesis; L-histidine from 5-phospho-alpha-D-ribose 1-diphosphate: step 5/9. Its function is as follows. IGPS catalyzes the conversion of PRFAR and glutamine to IGP, AICAR and glutamate. The HisF subunit catalyzes the cyclization activity that produces IGP and AICAR from PRFAR using the ammonia provided by the HisH subunit. This Psychrobacter cryohalolentis (strain ATCC BAA-1226 / DSM 17306 / VKM B-2378 / K5) protein is Imidazole glycerol phosphate synthase subunit HisF.